Here is a 1048-residue protein sequence, read N- to C-terminus: MIEWIIRRSVANRFLVMMGALFLSIWGTWTIINTPVDALPDLSDVQVIIKTSYPGQAPQIVENQVTYPLTTTMLSVPGAKTVRGFSQFGDSYVYVIFEDGTDLYWARSRVLEYLNQVQGKLPAGVSSEIGPDATGVGWIFEYALVDRSGKHDLSELRSLQDWFLKFELKTIPNVAEVASVGGVVKQYQIQVNPVKLSQYGISLPEVKQALESSNQEAGGSSVEIAEAEYMVRASGYLQSIDDFNNIVLKTGENGVPVYLRDVARVQTGPEMRRGIAELNGQGEVAGGVVILRSGKNARDVITAVRDKLETLKASLPEGVEIVTTYDRSQLIDRAIDNLSSKLLEEFFVVAIVCALFLWHVRSALVAIISLPLGLCIAFIVMHFQGLNANIMSLGGIAIAVGAMVDAAIVMIENAHKRLEEWDHRHPGEQIDNVTRWKVITDASVEVGPALFISLLIITLSFIPIFTLEGQEGRLFGPLAFTKTYSMAGAAALAIIVIPILMGFWIRGKIPAETSNPLNRVLIKAYHPLLLRVLHWPKTTLLVAALSIFTVVWPLSQVGGEFLPKINEGDLLYMPSTLPGVSPAEAAALLQTTDKLIKSVPEVASVFGKTGKAETATDSAPLEMVETTIQLKPEDQWRPGMTIDKIIDELDRTVRLPGLANLWVPPIRNRIDMLSTGIKSPIGIKVSGTVLSDIDATAQSIEAVAKTVPGVVSVLAERLEGGRYIDIDINREKASRYGMTVGDVQLFVSSAIGGAMVGETVEGVARYPINIRYPQDYRNSPQALKQMPILTPMKQQITLGDVADINVVSGPTMLKTENARPASWIYVDARGRDMVSVVNDIKTAISEKVKLRPGTSVAFSGQFELLEHANKKLKLMVPMTVMIIFILLYLAFRRVDEALLILMSLPFALVGGIWFLYWQGFHMSVATGTGFIALAGVAAEFGVVMLMYLRHAIEAHPELSRKETFTPEGLDEALYHGAVLRVRPKAMTVAVIIAGLLPILWGTGAGSEVMSRIAAPMIGGMITAPLLSLFIIPAAYKLIWLRRHKKSVS.

14 consecutive transmembrane segments (helical) span residues 14–34 (FLVMMGALFLSIWGTWTIINT), 125–145 (VSSEIGPDATGVGWIFEYALV), 338–358 (LSSKLLEEFFVVAIVCALFLW), 363–383 (ALVAIISLPLGLCIAFIVMHF), 391–411 (MSLGGIAIAVGAMVDAAIVMI), 446–466 (VGPALFISLLIITLSFIPIFT), 485–505 (SMAGAAALAIIVIPILMGFWI), 539–559 (TLLVAALSIFTVVWPLSQVGG), 737–757 (GMTVGDVQLFVSSAIGGAMVG), 871–891 (KLKLMVPMTVMIIFILLYLAF), 897–917 (ALLILMSLPFALVGGIWFLYW), 928–948 (TGFIALAGVAAEFGVVMLMYL), 985–1005 (AMTVAVIIAGLLPILWGTGAG), and 1012–1032 (IAAPMIGGMITAPLLSLFIIP).

This sequence belongs to the resistance-nodulation-cell division (RND) (TC 2.A.6) family.

It is found in the cell inner membrane. Functionally, component of the sil cation-efflux system that confers resistance to silver. May be part of a three-component cation/proton antiporter. The protein is Putative cation efflux system protein SilA (silA) of Salmonella typhimurium.